Reading from the N-terminus, the 664-residue chain is Translation factor guf1, mitochondrial (664 aa).

A mitochondrion-targeting transit peptide spans 1–43; the sequence is MRGCLQLARWLSAAPKGTAASLTRAPFGLANATRFFTNSAARA. One can recognise a tr-type G domain in the interval 66-246; that stretch reads ERYRNFCIVA…TVVDKIPAPI (181 aa). GTP-binding positions include 75 to 82, 139 to 143, and 193 to 196; these read AHVDHGKS, DTPGH, and NKVD.

This sequence belongs to the TRAFAC class translation factor GTPase superfamily. Classic translation factor GTPase family. LepA subfamily.

The protein resides in the mitochondrion inner membrane. The catalysed reaction is GTP + H2O = GDP + phosphate + H(+). In terms of biological role, promotes mitochondrial protein synthesis. May act as a fidelity factor of the translation reaction, by catalyzing a one-codon backward translocation of tRNAs on improperly translocated ribosomes. Binds to mitochondrial ribosomes in a GTP-dependent manner. The sequence is that of Translation factor guf1, mitochondrial (guf1) from Aspergillus clavatus (strain ATCC 1007 / CBS 513.65 / DSM 816 / NCTC 3887 / NRRL 1 / QM 1276 / 107).